Reading from the N-terminus, the 694-residue chain is Methionine--tRNA ligase (694 aa).

Positions 12 to 22 match the 'HIGH' region motif; the sequence is PYANGPLHLGH. 4 residues coordinate Zn(2+): C143, C146, C156, and C159. The 'KMSKS' region motif lies at 330–334; the sequence is KMSKS. K333 is a binding site for ATP. The tract at residues 550–577 is disordered; sequence LAAPATPATASKPAPAKADAKPAAAANP. Residues 551-575 show a composition bias toward low complexity; that stretch reads AAPATPATASKPAPAKADAKPAAAA. In terms of domain architecture, tRNA-binding spans 591–694; it reads DFAKLDLRIG…SGAQPGMPVR (104 aa).

Belongs to the class-I aminoacyl-tRNA synthetase family. MetG type 1 subfamily. In terms of assembly, homodimer. The cofactor is Zn(2+).

Its subcellular location is the cytoplasm. It catalyses the reaction tRNA(Met) + L-methionine + ATP = L-methionyl-tRNA(Met) + AMP + diphosphate. In terms of biological role, is required not only for elongation of protein synthesis but also for the initiation of all mRNA translation through initiator tRNA(fMet) aminoacylation. This is Methionine--tRNA ligase from Xanthomonas axonopodis pv. citri (strain 306).